The primary structure comprises 131 residues: Small ribosomal subunit protein eS17 (131 aa).

Belongs to the eukaryotic ribosomal protein eS17 family.

The polypeptide is Small ribosomal subunit protein eS17 (RPS17) (Theileria annulata).